Here is a 234-residue protein sequence, read N- to C-terminus: Transcriptional activator protein TraR (234 aa).

Residues 167 to 232 (TAEDAAWLDP…HLTALAIRRK (66 aa)) form the HTH luxR-type domain. A DNA-binding region (H-T-H motif) is located at residues 191–210 (MEEIADVEGVKYNSVRVKLR).

The protein belongs to the autoinducer-regulated transcriptional regulatory protein family.

Positive regulation of conjugal transfer of Ti plasmids. TraR activates target genes in the presence of AAI and also activates traR and traI themselves. The chain is Transcriptional activator protein TraR (traR) from Rhizobium radiobacter (Agrobacterium tumefaciens).